Consider the following 102-residue polypeptide: MSSGMCPVCGLPKELCICEEVAKEQQRITVKVNRRRYGKEVTVVEGFDASEIDLHELSTYLKSKFACGGTVKGNTVELQGNHLTRMKEVLMEKGFSAEQIKN.

The protein belongs to the SUI1 family.

This chain is Protein translation factor SUI1 homolog, found in Methanosarcina mazei (strain ATCC BAA-159 / DSM 3647 / Goe1 / Go1 / JCM 11833 / OCM 88) (Methanosarcina frisia).